We begin with the raw amino-acid sequence, 161 residues long: RuBisCO chaperone RbcX (161 aa).

Disordered stretches follow at residues 1–20 (MQFMGTASRMASTQRAKPME) and 130–161 (LGAEPSLPETEVSDRPSDSATPDDASNASHAD). Positions 147–161 (DSATPDDASNASHAD) are enriched in polar residues.

The protein belongs to the RbcX family. Homodimer. Interacts with the exposed C-terminal peptide of endogenous RbcL ('Lys-460-Asp-470') via its central cleft, as well as C-terminal peptides from other cyanobacterial RbcL. Contacts a second RbcL monomer via its peripheral polar surface.

The protein localises to the carboxysome. Its subcellular location is the cytoplasm. Functionally, an RbcL-specific chaperone. The central cleft of the RbcX homodimer (RbcX2) binds the C-terminus of an RbcL monomer, stabilizing the C-terminus and probably preventing its reassociation with chaperonin GroEL-ES. At the same time the peripheral region of RbcX2 binds a second RbcL monomer, bridging the RbcL homodimers in the correct orientation. The RbcX2(2)-bound RbcL dimers then assemble into the RbcL8 core (RbcL8-(RbcX2)8). RbcS binding triggers the release of RbcX2. The polypeptide is RuBisCO chaperone RbcX (Synechococcus sp. (strain ATCC 27144 / PCC 6301 / SAUG 1402/1) (Anacystis nidulans)).